The sequence spans 336 residues: Immune-associated nucleotide-binding protein 6 (336 aa).

The AIG1-type G domain occupies 33–241 (EPVKNVVLVG…FTDTMHRRIQ (209 aa)). The tract at residues 42–49 (GRTGNGKS) is G1. Residues 42–50 (GRTGNGKSA) and Ser63 each bind GTP. Residues 69–73 (GVTTR) form a G2 region. The interval 91 to 94 (DTPG) is G3. Residues 161-164 (TCGD) are G4. The tract at residues 200–202 (DNR) is G5. Asn201 contacts GTP. Positions 237 to 270 (HRRIQEEAARVKREEKEIEEKNIADEEKAALKKQ) form a coiled coil.

This sequence belongs to the TRAFAC class TrmE-Era-EngA-EngB-Septin-like GTPase superfamily. AIG1/Toc34/Toc159-like paraseptin GTPase family. IAN subfamily. In terms of tissue distribution, mostly expressed in pollen. Also detected in lateral roots and radicles.

This is Immune-associated nucleotide-binding protein 6 from Arabidopsis thaliana (Mouse-ear cress).